The sequence spans 56 residues: Ribosome modulation factor (56 aa).

This sequence belongs to the ribosome modulation factor family.

It localises to the cytoplasm. During stationary phase, converts 70S ribosomes to an inactive dimeric form (100S ribosomes). The chain is Ribosome modulation factor from Serratia proteamaculans (strain 568).